Here is a 164-residue protein sequence, read N- to C-terminus: UPF0304 protein YfbU (164 aa).

Belongs to the UPF0304 family.

The protein is UPF0304 protein YfbU of Shigella flexneri.